The primary structure comprises 350 residues: Biotin synthase (350 aa).

Positions 41 to 268 (NEVQISRLLS…KSRVRLSAGR (228 aa)) constitute a Radical SAM core domain. Positions 56, 60, and 63 each coordinate [4Fe-4S] cluster. The [2Fe-2S] cluster site is built by C100, C131, C191, and R263.

It belongs to the radical SAM superfamily. Biotin synthase family. As to quaternary structure, homodimer. Requires [4Fe-4S] cluster as cofactor. It depends on [2Fe-2S] cluster as a cofactor.

It catalyses the reaction (4R,5S)-dethiobiotin + (sulfur carrier)-SH + 2 reduced [2Fe-2S]-[ferredoxin] + 2 S-adenosyl-L-methionine = (sulfur carrier)-H + biotin + 2 5'-deoxyadenosine + 2 L-methionine + 2 oxidized [2Fe-2S]-[ferredoxin]. It participates in cofactor biosynthesis; biotin biosynthesis; biotin from 7,8-diaminononanoate: step 2/2. Catalyzes the conversion of dethiobiotin (DTB) to biotin by the insertion of a sulfur atom into dethiobiotin via a radical-based mechanism. The sequence is that of Biotin synthase from Shewanella frigidimarina (strain NCIMB 400).